Here is a 522-residue protein sequence, read N- to C-terminus: Tetratricopeptide repeat and J domain-containing co-chaperone DNJ1 (522 aa).

Positions 1-22 are cleaved as a signal peptide; it reads MKGFLLVALPVLFLSLSTQVFG. TPR repeat units lie at residues 29-62, 63-96, 97-130, 142-175, 210-243, 256-289, and 356-389; these read AAQI…DPTG, YANY…NPGF, VQAH…KSDS, GEAA…GPNS, TYLP…DPDS, LEKD…LVRF, and VDSW…SGRS. In terms of domain architecture, J spans 410–471; that stretch reads DYYKVLGVPR…ELRQRYDNGD (62 aa). The tract at residues 465 to 494 is disordered; that stretch reads QRYDNGDDPNDPTGGQQHNPFAHHGGGMPF.

The protein resides in the endoplasmic reticulum lumen. Endoplasmic reticulum co-chaperone crucial for survival and virulence factor production at elevated temperatures representative of febrile patients during infection. Contributes to virulence in a mouse model of cryptococcosis. With chaperone CNE1, coordinately maintains ER homeostasis and contributes to maintenance of cell wall architecture. The protein is Tetratricopeptide repeat and J domain-containing co-chaperone DNJ1 of Cryptococcus neoformans var. grubii serotype A (strain H99 / ATCC 208821 / CBS 10515 / FGSC 9487) (Filobasidiella neoformans var. grubii).